The sequence spans 265 residues: Hemin import ATP-binding protein HmuV (265 aa).

The ABC transporter domain maps to 13 to 249 (LKASNLHLQL…TAVENVYGWP (237 aa)). 45 to 52 (GPNGAGKS) is a binding site for ATP.

The protein belongs to the ABC transporter superfamily. Heme (hemin) importer (TC 3.A.1.14.5) family. The complex is composed of two ATP-binding proteins (HmuV), two transmembrane proteins (HmuU) and a solute-binding protein (HmuT).

The protein resides in the cell inner membrane. Its function is as follows. Part of the ABC transporter complex HmuTUV involved in hemin import. Responsible for energy coupling to the transport system. The protein is Hemin import ATP-binding protein HmuV of Photobacterium damselae subsp. damselae (Listonella damsela).